The following is a 221-amino-acid chain: MGWEKGLAPREKLVRLGAESLTDAELLAIFLRTGLPGVHVMQLAENLLAQFGSLYQLMTAEQSAFHNARGVGISKYTQIKAIAELSRRLFFSRLAKEDAMLNPEATGQYLQLLLSRREREVFLVLFLDNQHHVIRHQEMFVGTINSVEVHPREIVREALKANAAALILAHNHPSGKAEPSQADRAITEQIVKACLLLEIRVLDHLVIGHGEFVSFAERGWI.

The 123-residue stretch at 99 to 221 folds into the MPN domain; sequence AMLNPEATGQ…FVSFAERGWI (123 aa). Zn(2+) is bound by residues H170, H172, and D183. A JAMM motif motif is present at residues 170–183; that stretch reads HNHPSGKAEPSQAD.

It belongs to the UPF0758 family. YicR subfamily.

This chain is UPF0758 protein ECA0145, found in Pectobacterium atrosepticum (strain SCRI 1043 / ATCC BAA-672) (Erwinia carotovora subsp. atroseptica).